Reading from the N-terminus, the 288-residue chain is Large ribosomal subunit protein uL2 (288 aa).

Disordered stretches follow at residues 1–46 and 226–288; these read MAIH…RNVY and MVMN…RGKK. Gly residues predominate over residues 235–248; the sequence is NGGGQGKSKGGGGR. Over residues 279–288 the composition is skewed to basic residues; that stretch reads HNGRKPRGKK.

It belongs to the universal ribosomal protein uL2 family. In terms of assembly, part of the 50S ribosomal subunit. Forms a bridge to the 30S subunit in the 70S ribosome.

In terms of biological role, one of the primary rRNA binding proteins. Required for association of the 30S and 50S subunits to form the 70S ribosome, for tRNA binding and peptide bond formation. It has been suggested to have peptidyltransferase activity; this is somewhat controversial. Makes several contacts with the 16S rRNA in the 70S ribosome. In Opitutus terrae (strain DSM 11246 / JCM 15787 / PB90-1), this protein is Large ribosomal subunit protein uL2.